Here is a 515-residue protein sequence, read N- to C-terminus: 1-pyrroline-5-carboxylate dehydrogenase (515 aa).

Active-site residues include Glu-286 and Cys-320.

The protein belongs to the aldehyde dehydrogenase family. RocA subfamily.

It catalyses the reaction L-glutamate 5-semialdehyde + NAD(+) + H2O = L-glutamate + NADH + 2 H(+). It participates in amino-acid degradation; L-proline degradation into L-glutamate; L-glutamate from L-proline: step 2/2. The sequence is that of 1-pyrroline-5-carboxylate dehydrogenase from Bacillus pumilus (strain SAFR-032).